The chain runs to 352 residues: Glycogen synthase kinase 3 (352 aa).

The Protein kinase domain occupies 20–310; the sequence is YTVERVAGQG…PLDALCHPFF (291 aa). ATP is bound by residues 26–34 and Lys49; that span reads AGQGTFGTV. The Proton acceptor role is filled by Asp152.

The protein belongs to the protein kinase superfamily. CMGC Ser/Thr protein kinase family. GSK-3 subfamily. As to quaternary structure, inhibited by cyclin kinase 2 (CDK2) inhibitors, including GW8510.

The catalysed reaction is L-seryl-[tau protein] + ATP = O-phospho-L-seryl-[tau protein] + ADP + H(+). It carries out the reaction L-threonyl-[tau protein] + ATP = O-phospho-L-threonyl-[tau protein] + ADP + H(+). This is Glycogen synthase kinase 3 from Trypanosoma brucei brucei (strain 927/4 GUTat10.1).